The primary structure comprises 551 residues: Arginine--tRNA ligase (551 aa).

The 'HIGH' region motif lies at 125–135 (ANPTGPLHIGH).

The protein belongs to the class-I aminoacyl-tRNA synthetase family. Monomer.

It localises to the cytoplasm. The enzyme catalyses tRNA(Arg) + L-arginine + ATP = L-arginyl-tRNA(Arg) + AMP + diphosphate. In Oleidesulfovibrio alaskensis (strain ATCC BAA-1058 / DSM 17464 / G20) (Desulfovibrio alaskensis), this protein is Arginine--tRNA ligase.